The sequence spans 190 residues: Large ribosomal subunit protein uL5 (190 aa).

Belongs to the universal ribosomal protein uL5 family. As to quaternary structure, part of the 50S ribosomal subunit; part of the 5S rRNA/L5/L18/L25 subcomplex. Contacts the 5S rRNA and the P site tRNA. Forms a bridge to the 30S subunit in the 70S ribosome.

Functionally, this is one of the proteins that bind and probably mediate the attachment of the 5S RNA into the large ribosomal subunit, where it forms part of the central protuberance. In the 70S ribosome it contacts protein S13 of the 30S subunit (bridge B1b), connecting the 2 subunits; this bridge is implicated in subunit movement. Contacts the P site tRNA; the 5S rRNA and some of its associated proteins might help stabilize positioning of ribosome-bound tRNAs. This is Large ribosomal subunit protein uL5 from Blochmanniella floridana.